Here is a 111-residue protein sequence, read N- to C-terminus: ATP-dependent Clp protease adapter protein ClpS (111 aa).

It belongs to the ClpS family. Binds to the N-terminal domain of the chaperone ClpA.

Involved in the modulation of the specificity of the ClpAP-mediated ATP-dependent protein degradation. This is ATP-dependent Clp protease adapter protein ClpS from Legionella pneumophila (strain Paris).